A 669-amino-acid polypeptide reads, in one-letter code: DNA mismatch repair protein MutL (669 aa).

The tract at residues 361-409 (ENVFSQPYQAPVTSSTQKKSTGAYQGSAGKGLTDTQKSPQKTLDTRQFG) is disordered. 2 stretches are compositionally biased toward polar residues: residues 363–384 (VFSQPYQAPVTSSTQKKSTGAY) and 393–402 (TDTQKSPQKT).

Belongs to the DNA mismatch repair MutL/HexB family.

This protein is involved in the repair of mismatches in DNA. It is required for dam-dependent methyl-directed DNA mismatch repair. May act as a 'molecular matchmaker', a protein that promotes the formation of a stable complex between two or more DNA-binding proteins in an ATP-dependent manner without itself being part of a final effector complex. The polypeptide is DNA mismatch repair protein MutL (Proteus mirabilis (strain HI4320)).